Consider the following 479-residue polypeptide: Lactaldehyde dehydrogenase (479 aa).

Leucine 150 lines the NAD(+) pocket. (S)-lactate is bound at residue arginine 161. Residues 176–179 (KPSE), glutamine 214, and serine 230 contribute to the NAD(+) site. Glutamate 251 lines the (S)-lactate pocket. Catalysis depends on residues glutamate 251 and cysteine 285. Asparagine 286 is a (S)-lactate binding site. Arginine 336 contacts NAD(+). Residues glutamate 443 and histidine 449 each contribute to the (S)-lactate site.

The protein belongs to the aldehyde dehydrogenase family. In terms of assembly, homotetramer.

The enzyme catalyses (S)-lactaldehyde + NAD(+) + H2O = (S)-lactate + NADH + 2 H(+). The catalysed reaction is glycolaldehyde + NAD(+) + H2O = glycolate + NADH + 2 H(+). It functions in the pathway carbohydrate degradation; L-fucose degradation. Its pathway is carbohydrate degradation; L-rhamnose degradation. Substrate inhibition is very strong with lactaldehyde, diminishing progressively with glycolaldehyde, glyceraldehyde or methylglyoxal. Inhibited by p-hydroxy mercuribenzoate and by some cations, including Mn(2+), Ca(2+), Cu(2+) and Zn(2+). Inhibited by NADH. In terms of biological role, catalyzes the irreversible oxidation of L-lactaldehyde to L-lactate. Also shows high activity with glycolaldehyde and L-glyceraldehyde. Has weaker activity with various aldehydes such as methylglyoxal, propionaldehyde or benzaldehyde. Involved in the degradation of lactaldehyde produced during metabolism of L-fucose and L-rhamnose. It may be involved in several other metabolic pathways. The chain is Lactaldehyde dehydrogenase (aldA) from Escherichia coli (strain K12).